The following is a 152-amino-acid chain: Small ribosomal subunit protein uS13 (152 aa).

It belongs to the universal ribosomal protein uS13 family. As to quaternary structure, component of the small ribosomal subunit.

The protein resides in the cytoplasm. Component of the small ribosomal subunit. The ribosome is a large ribonucleoprotein complex responsible for the synthesis of proteins in the cell. The sequence is that of Small ribosomal subunit protein uS13 (rps18) from Ictalurus punctatus (Channel catfish).